Reading from the N-terminus, the 431-residue chain is Adenylosuccinate synthetase (431 aa).

Residues 12 to 18 (GDEGKGK) and 40 to 42 (GHT) contribute to the GTP site. Aspartate 13 acts as the Proton acceptor in catalysis. 2 residues coordinate Mg(2+): aspartate 13 and glycine 40. Residues 13 to 16 (DEGK), 38 to 41 (NAGH), threonine 130, arginine 144, glutamine 225, threonine 240, and arginine 304 contribute to the IMP site. The active-site Proton donor is the histidine 41. 300-306 (ATTGRPR) provides a ligand contact to substrate. Residues arginine 306, 332–334 (KLD), and 414–416 (SVG) contribute to the GTP site.

It belongs to the adenylosuccinate synthetase family. As to quaternary structure, homodimer. The cofactor is Mg(2+).

It is found in the cytoplasm. The catalysed reaction is IMP + L-aspartate + GTP = N(6)-(1,2-dicarboxyethyl)-AMP + GDP + phosphate + 2 H(+). It functions in the pathway purine metabolism; AMP biosynthesis via de novo pathway; AMP from IMP: step 1/2. Its function is as follows. Plays an important role in the de novo pathway of purine nucleotide biosynthesis. Catalyzes the first committed step in the biosynthesis of AMP from IMP. This Anaeromyxobacter sp. (strain Fw109-5) protein is Adenylosuccinate synthetase.